A 120-amino-acid polypeptide reads, in one-letter code: Large ribosomal subunit protein uL18 (120 aa).

Positions methionine 1–arginine 26 are disordered. The segment covering serine 8–glycine 18 has biased composition (basic residues).

The protein belongs to the universal ribosomal protein uL18 family. As to quaternary structure, part of the 50S ribosomal subunit; part of the 5S rRNA/L5/L18/L25 subcomplex. Contacts the 5S and 23S rRNAs.

This is one of the proteins that bind and probably mediate the attachment of the 5S RNA into the large ribosomal subunit, where it forms part of the central protuberance. In Trichormus variabilis (strain ATCC 29413 / PCC 7937) (Anabaena variabilis), this protein is Large ribosomal subunit protein uL18.